Reading from the N-terminus, the 238-residue chain is NADH-quinone oxidoreductase subunit C (238 aa).

Residues 1–20 (MSSPDQNPSDAAGQTGSSNE) are disordered.

Belongs to the complex I 30 kDa subunit family. NDH-1 is composed of 14 different subunits. Subunits NuoB, C, D, E, F, and G constitute the peripheral sector of the complex.

It is found in the cell membrane. The enzyme catalyses a quinone + NADH + 5 H(+)(in) = a quinol + NAD(+) + 4 H(+)(out). In terms of biological role, NDH-1 shuttles electrons from NADH, via FMN and iron-sulfur (Fe-S) centers, to quinones in the respiratory chain. The immediate electron acceptor for the enzyme in this species is believed to be a menaquinone. Couples the redox reaction to proton translocation (for every two electrons transferred, four hydrogen ions are translocated across the cytoplasmic membrane), and thus conserves the redox energy in a proton gradient. The sequence is that of NADH-quinone oxidoreductase subunit C from Mycobacterium ulcerans (strain Agy99).